We begin with the raw amino-acid sequence, 505 residues long: AMP phosphorylase (505 aa).

AMP is bound by residues Gly169, 195–200 (SRAITG), and Thr204. The Proton donor role is filled by Asp257. Residues Ser265 and Lys289 each contribute to the AMP site.

The protein belongs to the thymidine/pyrimidine-nucleoside phosphorylase family. Type 2 subfamily.

It carries out the reaction AMP + phosphate = alpha-D-ribose 1,5-bisphosphate + adenine. It catalyses the reaction CMP + phosphate = cytosine + alpha-D-ribose 1,5-bisphosphate. The enzyme catalyses UMP + phosphate = alpha-D-ribose 1,5-bisphosphate + uracil. In terms of biological role, catalyzes the conversion of AMP and phosphate to adenine and ribose 1,5-bisphosphate (R15P). Exhibits phosphorylase activity toward CMP and UMP in addition to AMP. Functions in an archaeal AMP degradation pathway, together with R15P isomerase and RubisCO. The protein is AMP phosphorylase of Methanocorpusculum labreanum (strain ATCC 43576 / DSM 4855 / Z).